The following is a 453-amino-acid chain: MREIVSIQCGQAGMNQVSTAFWSTITDEHGLDADGHLRPDASSLESDRLDVFFNEASNKKYVPRAVAVDLEPATLDAIRSGPLGHIYRPDNLISGESGAGNNWAKGFYTEGAELMDSVMDIIRREAEQSESLQGFQLAHSLGGGTGSGLGTLLLTKIREEYPDRMLSTYSVLPSPKVSDTVTEPYNAVLSFHQLIDNADATYCLDNEALYDICEKTLKINRPSHQDLNSLIALVMSGVTTGLRYPGQLNGDLRKLAVNLVPFPRLHFFTTGFAPLFAKNSRAFHNLTVPELTQQLFNPANVMAACNPYHGRYLTISTIFRGQVAMKEVEDAIHTARTKYSPYFVEWIPNNVQTSVCNVPPKGLTTSATFIANSTAVQELFERTANQFSVMFKRKGFLHWYTGEGMEPVEFSEAQSDLEDLILEYQQYQNAGVDEDEELMDHEEYADEGVEDFN.

GTP contacts are provided by Gln11, Glu71, Ser140, Gly144, Thr145, Gly146, Asn206, and Asn228. Glu71 is a Mg(2+) binding site.

This sequence belongs to the tubulin family. In terms of assembly, dimer of alpha and beta chains. A typical microtubule is a hollow water-filled tube with an outer diameter of 25 nm and an inner diameter of 15 nM. Alpha-beta heterodimers associate head-to-tail to form protofilaments running lengthwise along the microtubule wall with the beta-tubulin subunit facing the microtubule plus end conferring a structural polarity. Microtubules usually have 13 protofilaments but different protofilament numbers can be found in some organisms and specialized cells. Requires Mg(2+) as cofactor.

It localises to the cytoplasm. The protein resides in the cytoskeleton. Tubulin is the major constituent of microtubules, a cylinder consisting of laterally associated linear protofilaments composed of alpha- and beta-tubulin heterodimers. Microtubules grow by the addition of GTP-tubulin dimers to the microtubule end, where a stabilizing cap forms. Below the cap, tubulin dimers are in GDP-bound state, owing to GTPase activity of alpha-tubulin. In Geotrichum candidum (Oospora lactis), this protein is Tubulin beta-2 chain.